Here is a 476-residue protein sequence, read N- to C-terminus: ATP synthase subunit beta (476 aa).

154–161 (GGAGVGKT) provides a ligand contact to ATP.

It belongs to the ATPase alpha/beta chains family. F-type ATPases have 2 components, CF(1) - the catalytic core - and CF(0) - the membrane proton channel. CF(1) has five subunits: alpha(3), beta(3), gamma(1), delta(1), epsilon(1). CF(0) has three main subunits: a(1), b(2) and c(9-12). The alpha and beta chains form an alternating ring which encloses part of the gamma chain. CF(1) is attached to CF(0) by a central stalk formed by the gamma and epsilon chains, while a peripheral stalk is formed by the delta and b chains.

The protein resides in the cell inner membrane. It carries out the reaction ATP + H2O + 4 H(+)(in) = ADP + phosphate + 5 H(+)(out). Functionally, produces ATP from ADP in the presence of a proton gradient across the membrane. The catalytic sites are hosted primarily by the beta subunits. This Afipia carboxidovorans (strain ATCC 49405 / DSM 1227 / KCTC 32145 / OM5) (Oligotropha carboxidovorans) protein is ATP synthase subunit beta.